The chain runs to 222 residues: Cell division protein FtsQ (222 aa).

At 1–5 the chain is on the cytoplasmic side; it reads MNKKV. Residues 6–26 traverse the membrane as a helical segment; sequence IAIVVGVVVVLVAILGVVAWF. Residues 27–222 are Extracellular-facing; it reads VPILKVGNIE…ISSPSMVTVR (196 aa). The POTRA domain maps to 30–98; sequence LKVGNIEVTG…STITVELTER (69 aa).

This sequence belongs to the FtsQ/DivIB family. FtsQ subfamily.

Its subcellular location is the cell membrane. In terms of biological role, essential cell division protein. This Corynebacterium glutamicum (strain ATCC 13032 / DSM 20300 / JCM 1318 / BCRC 11384 / CCUG 27702 / LMG 3730 / NBRC 12168 / NCIMB 10025 / NRRL B-2784 / 534) protein is Cell division protein FtsQ.